Reading from the N-terminus, the 194-residue chain is Imidazoleglycerol-phosphate dehydratase (194 aa).

This sequence belongs to the imidazoleglycerol-phosphate dehydratase family.

It localises to the cytoplasm. It catalyses the reaction D-erythro-1-(imidazol-4-yl)glycerol 3-phosphate = 3-(imidazol-4-yl)-2-oxopropyl phosphate + H2O. The protein operates within amino-acid biosynthesis; L-histidine biosynthesis; L-histidine from 5-phospho-alpha-D-ribose 1-diphosphate: step 6/9. The protein is Imidazoleglycerol-phosphate dehydratase of Bacillus licheniformis (strain ATCC 14580 / DSM 13 / JCM 2505 / CCUG 7422 / NBRC 12200 / NCIMB 9375 / NCTC 10341 / NRRL NRS-1264 / Gibson 46).